The primary structure comprises 249 residues: tRNA (guanine-N(1)-)-methyltransferase (249 aa).

S-adenosyl-L-methionine-binding positions include Gly-113 and 133–138; that span reads IGDYVL.

Belongs to the RNA methyltransferase TrmD family. As to quaternary structure, homodimer.

The protein localises to the cytoplasm. It catalyses the reaction guanosine(37) in tRNA + S-adenosyl-L-methionine = N(1)-methylguanosine(37) in tRNA + S-adenosyl-L-homocysteine + H(+). Functionally, specifically methylates guanosine-37 in various tRNAs. This chain is tRNA (guanine-N(1)-)-methyltransferase, found in Aeromonas hydrophila subsp. hydrophila (strain ATCC 7966 / DSM 30187 / BCRC 13018 / CCUG 14551 / JCM 1027 / KCTC 2358 / NCIMB 9240 / NCTC 8049).